The sequence spans 273 residues: 2,3,4,5-tetrahydropyridine-2,6-dicarboxylate N-succinyltransferase (273 aa).

The substrate site is built by arginine 104 and aspartate 141.

Belongs to the transferase hexapeptide repeat family. In terms of assembly, homotrimer.

The protein resides in the cytoplasm. The enzyme catalyses (S)-2,3,4,5-tetrahydrodipicolinate + succinyl-CoA + H2O = (S)-2-succinylamino-6-oxoheptanedioate + CoA. The protein operates within amino-acid biosynthesis; L-lysine biosynthesis via DAP pathway; LL-2,6-diaminopimelate from (S)-tetrahydrodipicolinate (succinylase route): step 1/3. This chain is 2,3,4,5-tetrahydropyridine-2,6-dicarboxylate N-succinyltransferase, found in Blochmanniella pennsylvanica (strain BPEN).